The primary structure comprises 179 residues: DELTA-actitoxin-Afr1c (179 aa).

The tract at residues Ser-1–Val-29 is N-terminal alpha-helix that contributes to the pore. Residues Gly-11 to Ser-30 are N-terminal region. Arg-31 contributes to the an N-(acyl)-sphingosylphosphocholine binding site. N-acetyl-D-glucosamine 6-sulfate contacts are provided by Tyr-51 and Arg-53. Positions 53, 54, 79, 85, 113, 114, 116, 133, 137, 138, 144, and 168 each coordinate an N-(acyl)-sphingosylphosphocholine. The interval Ser-105–Lys-120 is trp-rich region, which is important for the binding to lipid membrane. An N-acetyl-D-glucosamine 6-sulfate-binding site is contributed by Tyr-138. Residues Arg-144–Asp-146 carry the Cell attachment site, crucial for protein stability motif.

The protein belongs to the actinoporin family. Sea anemone subfamily. As to quaternary structure, octamer or nonamer in membranes. Monomer in the soluble state.

It is found in the secreted. The protein localises to the nematocyst. The protein resides in the target cell membrane. Functionally, pore-forming toxin (PFT) that consists of a crown-shaped octamer or nonamer that forms cation-selective hydrophilic pores of about 1.5 nm (inside) and 13 nm (outside) and causes cytolysis. It causes cardiac stimulation. Also causes hemolysis (HC(50)=0.3 nM). Interestingly, the Phe-16 is crucial for hemolysis. Pore formation is a multi-step process that involves specific recognition of membrane sphingomyelin (but neither cholesterol nor phosphatidylcholine) using aromatic rich region and adjacent phosphocholine (POC) binding site, firm binding to the membrane (mainly driven by hydrophobic interactions) accompanied by the transfer of the N-terminal region to the lipid-water interface and finally pore formation after oligomerization of monomers. It is probable that a dimeric form is an assembly intermediate before the complete oligomerization. The formation of stable pores occurs only in vesicles composed of DOPC/SM (there is no oligomerization when the PFT is treated with vesicles of DOPC or SM alone). The transmembrane pore displays 8 lateral perforations, one at each subunit-subunit interface, partially occupied by the acyl-chain region of a bridging lipid. Each pore contains 24 lipid molecules, firmly bound to each subunit, that is, 3 lipids (L1, L2, L3, L4 and/or L5) are associated to each subunit. Lipid L1 bridges 2 subunits, whereas lipids L2 and L3 bind to sites at single subunit. The chain is DELTA-actitoxin-Afr1c from Actinia fragacea (Strawberry anemone).